The primary structure comprises 311 residues: Peptide methionine sulfoxide reductase MsrA/MsrB 2 (311 aa).

The tract at residues methionine 1–asparagine 155 is peptide methionine sulfoxide reductase A. Cysteine 10 is an active-site residue. The region spanning aspartate 172–lysine 295 is the MsrB domain. The active-site Nucleophile is cysteine 284.

The protein in the N-terminal section; belongs to the MsrA Met sulfoxide reductase family. This sequence in the C-terminal section; belongs to the MsrB Met sulfoxide reductase family.

It carries out the reaction L-methionyl-[protein] + [thioredoxin]-disulfide + H2O = L-methionyl-(S)-S-oxide-[protein] + [thioredoxin]-dithiol. The enzyme catalyses [thioredoxin]-disulfide + L-methionine + H2O = L-methionine (S)-S-oxide + [thioredoxin]-dithiol. It catalyses the reaction L-methionyl-[protein] + [thioredoxin]-disulfide + H2O = L-methionyl-(R)-S-oxide-[protein] + [thioredoxin]-dithiol. In terms of biological role, has an important function as a repair enzyme for proteins that have been inactivated by oxidation. Catalyzes the reversible oxidation-reduction of methionine sulfoxide in proteins to methionine. In Streptococcus pneumoniae serotype 4 (strain ATCC BAA-334 / TIGR4), this protein is Peptide methionine sulfoxide reductase MsrA/MsrB 2 (msrAB2).